The primary structure comprises 246 residues: Small ribosomal subunit protein uS2 (246 aa).

It belongs to the universal ribosomal protein uS2 family.

The protein is Small ribosomal subunit protein uS2 of Burkholderia vietnamiensis (strain G4 / LMG 22486) (Burkholderia cepacia (strain R1808)).